A 126-amino-acid polypeptide reads, in one-letter code: C2H2-type zinc-finger transcription factor M5 (126 aa).

2 disordered regions span residues alanine 17–arginine 52 and glutamate 103–aspartate 126. Positions serine 38–aspartate 48 are enriched in polar residues. Residues asparagine 51 to asparagine 76 form a C2H2-type 1; degenerate zinc finger. A C2H2-type 2; degenerate zinc finger spans residues phenylalanine 83–asparagine 115. A compositionally biased stretch (basic and acidic residues) spans asparagine 115–aspartate 126.

It belongs to the GLI C2H2-type zinc-finger protein family.

It is found in the nucleus. In terms of biological role, transcription factor that probably regulates the expression of the gene cluster that mediates the biosynthesis of squalestatin S1 (SQS1, also known as zaragozic acid A), a heavily oxidized fungal polyketide that offers potent cholesterol lowering activity by targeting squalene synthase (SS). In Phoma sp. (strain ATCC 20986 / MF5453), this protein is C2H2-type zinc-finger transcription factor M5.